The primary structure comprises 290 residues: NH(3)-dependent NAD(+) synthetase (290 aa).

33 to 40 contributes to the ATP binding site; it reads GVSGGVDS. Asp-39 serves as a coordination point for Mg(2+). Arg-154 lines the deamido-NAD(+) pocket. Thr-174 lines the ATP pocket. Residue Glu-179 coordinates Mg(2+). Residues Lys-187 and Asp-194 each contribute to the deamido-NAD(+) site. ATP contacts are provided by Lys-203 and Ser-225.

Belongs to the NAD synthetase family. As to quaternary structure, homodimer.

The catalysed reaction is deamido-NAD(+) + NH4(+) + ATP = AMP + diphosphate + NAD(+) + H(+). It functions in the pathway cofactor biosynthesis; NAD(+) biosynthesis; NAD(+) from deamido-NAD(+) (ammonia route): step 1/1. Functionally, catalyzes the ATP-dependent amidation of deamido-NAD to form NAD. Uses ammonia as a nitrogen source. The chain is NH(3)-dependent NAD(+) synthetase from Thermotoga neapolitana (strain ATCC 49049 / DSM 4359 / NBRC 107923 / NS-E).